Consider the following 130-residue polypeptide: MAKAAAPRIRKKERKNIISGVAHVLSTFNNTMITISDAQGNAIAWSSSGAQGFKGSRKSTPYAAQVAAEDAGRKAREHGMETLEIEVSGPGSGRESALRALQAVGFNITSIRDMTPVPHNGCRPRKRRRV.

The protein belongs to the universal ribosomal protein uS11 family. In terms of assembly, part of the 30S ribosomal subunit. Interacts with proteins S7 and S18. Binds to IF-3.

Located on the platform of the 30S subunit, it bridges several disparate RNA helices of the 16S rRNA. Forms part of the Shine-Dalgarno cleft in the 70S ribosome. The chain is Small ribosomal subunit protein uS11 from Gluconobacter oxydans (strain 621H) (Gluconobacter suboxydans).